The following is a 276-amino-acid chain: Omega-amidase NIT2-A (276 aa).

The region spanning 4–248 (FKLSLVQFLV…ETVLSAEIDL (245 aa)) is the CN hydrolase domain. E43 acts as the Proton acceptor in catalysis. The active-site Proton donor is the K112. The active-site Nucleophile is C153.

This sequence belongs to the carbon-nitrogen hydrolase superfamily. NIT1/NIT2 family. Homodimer.

Its subcellular location is the cytoplasm. It carries out the reaction 2-oxoglutaramate + H2O = 2-oxoglutarate + NH4(+). The enzyme catalyses 2-oxosuccinamate + H2O = oxaloacetate + NH4(+). Functionally, has omega-amidase activity. The role of omega-amidase is to remove potentially toxic intermediates by converting 2-oxoglutaramate and 2-oxosuccinamate to biologically useful 2-oxoglutarate and oxaloacetate, respectively. The sequence is that of Omega-amidase NIT2-A (nit2a) from Xenopus laevis (African clawed frog).